An 887-amino-acid polypeptide reads, in one-letter code: Alanine--tRNA ligase (887 aa).

Zn(2+) contacts are provided by H573, H577, C676, and H680.

This sequence belongs to the class-II aminoacyl-tRNA synthetase family. Zn(2+) is required as a cofactor.

Its subcellular location is the cytoplasm. It carries out the reaction tRNA(Ala) + L-alanine + ATP = L-alanyl-tRNA(Ala) + AMP + diphosphate. Its function is as follows. Catalyzes the attachment of alanine to tRNA(Ala) in a two-step reaction: alanine is first activated by ATP to form Ala-AMP and then transferred to the acceptor end of tRNA(Ala). Also edits incorrectly charged Ser-tRNA(Ala) and Gly-tRNA(Ala) via its editing domain. In Corynebacterium jeikeium (strain K411), this protein is Alanine--tRNA ligase.